The chain runs to 168 residues: Protein-export protein SecB (168 aa).

The interval 1–21 (MADQPSGNNDAKQAETNGNTV) is disordered.

Belongs to the SecB family. As to quaternary structure, homotetramer, a dimer of dimers. One homotetramer interacts with 1 SecA dimer.

It localises to the cytoplasm. Functionally, one of the proteins required for the normal export of preproteins out of the cell cytoplasm. It is a molecular chaperone that binds to a subset of precursor proteins, maintaining them in a translocation-competent state. It also specifically binds to its receptor SecA. In Chelativorans sp. (strain BNC1), this protein is Protein-export protein SecB.